Consider the following 59-residue polypeptide: Large ribosomal subunit protein uL30 (59 aa).

Belongs to the universal ribosomal protein uL30 family. As to quaternary structure, part of the 50S ribosomal subunit.

This is Large ribosomal subunit protein uL30 from Enterobacter sp. (strain 638).